The primary structure comprises 32 residues: Photosystem II reaction center protein T (32 aa).

The helical transmembrane segment at 3-23 (ALVYTFLLVATLGIIFFAIFF) threads the bilayer.

It belongs to the PsbT family. In terms of assembly, PSII is composed of 1 copy each of membrane proteins PsbA, PsbB, PsbC, PsbD, PsbE, PsbF, PsbH, PsbI, PsbJ, PsbK, PsbL, PsbM, PsbT, PsbY, PsbZ, Psb30/Ycf12, at least 3 peripheral proteins of the oxygen-evolving complex and a large number of cofactors. It forms dimeric complexes.

It is found in the plastid. The protein localises to the chloroplast thylakoid membrane. Functionally, found at the monomer-monomer interface of the photosystem II (PS II) dimer, plays a role in assembly and dimerization of PSII. PSII is a light-driven water plastoquinone oxidoreductase, using light energy to abstract electrons from H(2)O, generating a proton gradient subsequently used for ATP formation. This chain is Photosystem II reaction center protein T, found in Psilotum nudum (Whisk fern).